Reading from the N-terminus, the 264-residue chain is Thymidylate synthase (264 aa).

DUMP is bound at residue Arg21. Residue His51 participates in (6R)-5,10-methylene-5,6,7,8-tetrahydrofolate binding. 126-127 (RR) contacts dUMP. Cys146 serves as the catalytic Nucleophile. DUMP-binding positions include 166 to 169 (RSAD), Asn177, and 207 to 209 (HLY). (6R)-5,10-methylene-5,6,7,8-tetrahydrofolate is bound at residue Asp169. Ser263 is a (6R)-5,10-methylene-5,6,7,8-tetrahydrofolate binding site.

It belongs to the thymidylate synthase family. Bacterial-type ThyA subfamily. As to quaternary structure, homodimer.

It localises to the cytoplasm. It catalyses the reaction dUMP + (6R)-5,10-methylene-5,6,7,8-tetrahydrofolate = 7,8-dihydrofolate + dTMP. The protein operates within pyrimidine metabolism; dTTP biosynthesis. Catalyzes the reductive methylation of 2'-deoxyuridine-5'-monophosphate (dUMP) to 2'-deoxythymidine-5'-monophosphate (dTMP) while utilizing 5,10-methylenetetrahydrofolate (mTHF) as the methyl donor and reductant in the reaction, yielding dihydrofolate (DHF) as a by-product. This enzymatic reaction provides an intracellular de novo source of dTMP, an essential precursor for DNA biosynthesis. The chain is Thymidylate synthase from Neisseria meningitidis serogroup A / serotype 4A (strain DSM 15465 / Z2491).